The following is a 24-amino-acid chain: Aldehyde dehydrogenase gamma chain (24 aa).

Heterotrimer composed of an alpha, a beta and a gamma chain. [2Fe-2S] cluster serves as cofactor.

The catalysed reaction is an aldehyde + a quinone + H2O = a quinol + a carboxylate + H(+). This is Aldehyde dehydrogenase gamma chain from Comamonas testosteroni (Pseudomonas testosteroni).